Reading from the N-terminus, the 92-residue chain is MKKLCTALLLSLFAISFAHANETKQIVLKVKEMNCQLCAYLVNKELRNINGVISTKASIKDGLVTVVEDPNVTNQQLFDAIHKLKYTAEVVN.

An HMA domain is found at 24–89 (KQIVLKVKEM…AIHKLKYTAE (66 aa)). A metal cation contacts are provided by Cys-35 and Cys-38.

This is an uncharacterized protein from Haemophilus influenzae (strain ATCC 51907 / DSM 11121 / KW20 / Rd).